Consider the following 458-residue polypeptide: ATP synthase subunit beta (458 aa).

148–155 (GGAGVGKT) contacts ATP.

It belongs to the ATPase alpha/beta chains family. In terms of assembly, F-type ATPases have 2 components, CF(1) - the catalytic core - and CF(0) - the membrane proton channel. CF(1) has five subunits: alpha(3), beta(3), gamma(1), delta(1), epsilon(1). CF(0) has three main subunits: a(1), b(2) and c(9-12). The alpha and beta chains form an alternating ring which encloses part of the gamma chain. CF(1) is attached to CF(0) by a central stalk formed by the gamma and epsilon chains, while a peripheral stalk is formed by the delta and b chains.

The protein localises to the cell inner membrane. It carries out the reaction ATP + H2O + 4 H(+)(in) = ADP + phosphate + 5 H(+)(out). In terms of biological role, produces ATP from ADP in the presence of a proton gradient across the membrane. The catalytic sites are hosted primarily by the beta subunits. The protein is ATP synthase subunit beta of Nitrosococcus oceani (strain ATCC 19707 / BCRC 17464 / JCM 30415 / NCIMB 11848 / C-107).